The sequence spans 311 residues: MSAAPHISVLLDEVVEALDAKPGDVVVDGTFGAGGYTRAVLPTGASVVAFDRDPTVRQFAANLPADRFRLVQARFSEMLDELGPESVEGVMLDLGVSSMQLDQAERGFSFMRDGPLDMRMGDTGPTAADLVNTLDHAELAKILYVYGEEHASRRIASFILRRREERPFERTLDLAEVIERAVGGRKGAKVHPATRSFQGLRIAVNDELGELEAGLAAAERVLKPGGRLVVVTFHSLEDRIVKAFLAERAGKAPGGSRHAPPVAAGAAPSFQLISNKAIAPSEAELAVNPRARSSKLRAAVRTDAPVWEAAG.

Residues 34 to 36 (GGY), Asp-51, Phe-75, Asp-93, and Gln-100 each bind S-adenosyl-L-methionine.

It belongs to the methyltransferase superfamily. RsmH family.

Its subcellular location is the cytoplasm. The enzyme catalyses cytidine(1402) in 16S rRNA + S-adenosyl-L-methionine = N(4)-methylcytidine(1402) in 16S rRNA + S-adenosyl-L-homocysteine + H(+). Its function is as follows. Specifically methylates the N4 position of cytidine in position 1402 (C1402) of 16S rRNA. The sequence is that of Ribosomal RNA small subunit methyltransferase H from Caulobacter vibrioides (strain ATCC 19089 / CIP 103742 / CB 15) (Caulobacter crescentus).